A 365-amino-acid chain; its full sequence is tRNA/tmRNA (uracil-C(5))-methyltransferase (365 aa).

Residues Q189, Y217, N222, E238, and D298 each contribute to the S-adenosyl-L-methionine site. C323 (nucleophile) is an active-site residue. Residue E357 is the Proton acceptor of the active site.

This sequence belongs to the class I-like SAM-binding methyltransferase superfamily. RNA M5U methyltransferase family. TrmA subfamily.

It catalyses the reaction uridine(54) in tRNA + S-adenosyl-L-methionine = 5-methyluridine(54) in tRNA + S-adenosyl-L-homocysteine + H(+). The catalysed reaction is uridine(341) in tmRNA + S-adenosyl-L-methionine = 5-methyluridine(341) in tmRNA + S-adenosyl-L-homocysteine + H(+). Functionally, dual-specificity methyltransferase that catalyzes the formation of 5-methyluridine at position 54 (m5U54) in all tRNAs, and that of position 341 (m5U341) in tmRNA (transfer-mRNA). This Shewanella amazonensis (strain ATCC BAA-1098 / SB2B) protein is tRNA/tmRNA (uracil-C(5))-methyltransferase.